Consider the following 561-residue polypeptide: MRLWKSMAWGILLWHSQSGALCPAWPPARAAEEITRLQQQLADWNDIYWKQGVSAVDDSVYDQLSARLVQWQRCVGQDVSSTPVSPPLNGTTMHPVAHTGVRKLADRQAVEQWMRGRSELWVQPKVDGVAVTLVYQNGKLTRAISRGNGLQGEDWTPKIRLIPSIPQTTQGALANAVLQGEIFLQREGHIQQRMGGMNARSKVAGMLMRQDNASALNSLGIFIWAWPDGPANMPERLSQLAKAGFSLTNKYTLAVKDASEVERARQSWLTSALPFVTDGVVIRMAKEPASQHWRPGQGDWLAAWKYPPVAQVAQVSAIQFSVGKSGKITVVASLVPVILDDKRVQRVNIGSVKRWEAWDIAPGDQILVSLAGQGIPRLDEVVWRSRERSKPVPPDSHFNSLTCFYASATCQEQFISRLVWLGSRSALGLDGMGEASWRALHQTHRFEHIFSWLALTSAQIANTPGFAKGKSEQIWRQFNLARRQPFTRWIMAMDIPLTQAALQASGDRSWEQLLMRTEQHWRQLPATGERRAGRVIDWRDNPQIKTLSRWLAAQHIPGFGS.

Lys125 acts as the N6-AMP-lysine intermediate in catalysis.

The protein belongs to the NAD-dependent DNA ligase family. LigB subfamily.

The enzyme catalyses NAD(+) + (deoxyribonucleotide)n-3'-hydroxyl + 5'-phospho-(deoxyribonucleotide)m = (deoxyribonucleotide)n+m + AMP + beta-nicotinamide D-nucleotide.. Its function is as follows. Catalyzes the formation of phosphodiester linkages between 5'-phosphoryl and 3'-hydroxyl groups in double-stranded DNA using NAD as a coenzyme and as the energy source for the reaction. This Salmonella choleraesuis (strain SC-B67) protein is DNA ligase B.